A 955-amino-acid chain; its full sequence is Glycine dehydrogenase (decarboxylating) (955 aa).

Residue K702 is modified to N6-(pyridoxal phosphate)lysine.

The protein belongs to the GcvP family. As to quaternary structure, the glycine cleavage system is composed of four proteins: P, T, L and H. Pyridoxal 5'-phosphate is required as a cofactor.

It catalyses the reaction N(6)-[(R)-lipoyl]-L-lysyl-[glycine-cleavage complex H protein] + glycine + H(+) = N(6)-[(R)-S(8)-aminomethyldihydrolipoyl]-L-lysyl-[glycine-cleavage complex H protein] + CO2. In terms of biological role, the glycine cleavage system catalyzes the degradation of glycine. The P protein binds the alpha-amino group of glycine through its pyridoxal phosphate cofactor; CO(2) is released and the remaining methylamine moiety is then transferred to the lipoamide cofactor of the H protein. The chain is Glycine dehydrogenase (decarboxylating) from Stenotrophomonas maltophilia (strain R551-3).